The chain runs to 183 residues: CKLF-like MARVEL transmembrane domain-containing protein 6 (183 aa).

Met1 is subject to N-acetylmethionine. Over 1–39 (MENGAVYSPTTEEDPGPARGPRSGLAAYFFMGRLPLLRR) the chain is Cytoplasmic. Ser8 is subject to Phosphoserine. In terms of domain architecture, MARVEL spans 33 to 160 (RLPLLRRVLK…DFITMLYEKR (128 aa)). The chain crosses the membrane as a helical span at residues 40–60 (VLKGLQLLLSLLAFICEEVVS). The Extracellular portion of the chain corresponds to 61–67 (QCTLCGG). A helical membrane pass occupies residues 68 to 88 (LYFFEFVSCSAFLLSLLILIV). At 89 to 106 (YCTPFYERVDTTKVKSSD) the chain is on the cytoplasmic side. Residues 107–127 (FYITLGTGCVFLLASIIFVST) traverse the membrane as a helical segment. Over 128-134 (HDRTSAE) the chain is Extracellular. Residues 135–155 (IAAIVFGFIASFMFLLDFITM) form a helical membrane-spanning segment. The Cytoplasmic portion of the chain corresponds to 156-183 (LYEKRQESQLRKPENTTRAEALTEPLNA). Residue Thr171 is modified to Phosphothreonine.

This sequence belongs to the chemokine-like factor family. In terms of assembly, interacts with PD-L1/CD274 (via transmembrane domain); the interaction is direct. Interacts with CMTM4. Interacts with CD58, ARG1, ENO1 and TMPO. In terms of tissue distribution, expressed in the leukocytes, placenta and testis.

It is found in the cell membrane. It localises to the early endosome membrane. The protein resides in the recycling endosome membrane. In terms of biological role, master regulator of recycling and plasma membrane expression of PD-L1/CD274, an immune inhibitory ligand critical for immune tolerance to self and antitumor immunity. Associates with both constitutive and IFNG-induced PD-L1/CD274 at recycling endosomes, where it protects PD-L1/CD274 from being targeted for lysosomal degradation, likely by preventing its STUB1-mediated ubiquitination. May stabilize PD-L1/CD274 expression on antigen presenting cells and potentiates inhibitory signaling by PDCD1/CD279, its receptor on T-cells, ultimately triggering T-cell anergy. The protein is CKLF-like MARVEL transmembrane domain-containing protein 6 of Homo sapiens (Human).